Reading from the N-terminus, the 184-residue chain is UPF0397 protein SAB2561c (184 aa).

The next 5 membrane-spanning stretches (helical) occupy residues 11–31 (VVAI…VVIP), 44–64 (AFLA…TGLV), 77–97 (AWWS…WIGL), 111–131 (MIYF…LIAP), and 148–168 (QGVI…TILL).

Belongs to the UPF0397 family.

Its subcellular location is the cell membrane. The polypeptide is UPF0397 protein SAB2561c (Staphylococcus aureus (strain bovine RF122 / ET3-1)).